The sequence spans 106 residues: Large ribosomal subunit protein uL24 (106 aa).

Belongs to the universal ribosomal protein uL24 family. In terms of assembly, part of the 50S ribosomal subunit.

Its function is as follows. One of two assembly initiator proteins, it binds directly to the 5'-end of the 23S rRNA, where it nucleates assembly of the 50S subunit. Functionally, one of the proteins that surrounds the polypeptide exit tunnel on the outside of the subunit. The protein is Large ribosomal subunit protein uL24 of Alkalilimnicola ehrlichii (strain ATCC BAA-1101 / DSM 17681 / MLHE-1).